We begin with the raw amino-acid sequence, 5061 residues long: E3 ubiquitin-protein ligase rnf213-beta (5061 aa).

Over residues 1-12 the composition is skewed to basic residues; it reads MTRKRKSGKKGK. Residues 1–334 are disordered; that stretch reads MTRKRKSGKK…QRKPSPVRAP (334 aa). 2 stretches are compositionally biased toward polar residues: residues 24-52 and 75-87; these read GGST…TQKD and SDGS…TNKE. The span at 100–110 shows a compositional bias: basic residues; it reads LQKKGPQKRKG. Polar residues-rich tracts occupy residues 127–163 and 172–200; these read QTSY…TSAS and TETV…QPPQ. Composition is skewed to basic and acidic residues over residues 217 to 229 and 236 to 289; these read KGSE…EESV and LSEI…EEPK. Residues 292–301 are compositionally biased toward low complexity; sequence AAAAATGKTG. A compositionally biased stretch (polar residues) spans 306–322; that stretch reads EQTNQIEANQDSTMESK. Residues 1923 to 1928, Glu-2023, Asp-2074, Lys-2417, and Ser-2492 each bind ATP; that span reads AVGKSL. Residues Cys-3957, Cys-3960, Cys-3972, His-3974, Cys-3977, Cys-3980, Cys-3993, Cys-3996, Cys-4451, and His-4455 each contribute to the Zn(2+) site. Residues 3957–3997 form an RING-type zinc finger; the sequence is CRVCLMELSEPFALPCEHVFCRSCLRRSMEREEAQHCPVCR. The RZ-type zinc-finger motif lies at 4429-4501; that stretch reads MPDDHTSEAK…AYGDYDRTRP (73 aa). The active-site Nucleophile; for E3 ubiquitin-lipopolysaccharide ligase activity is the Cys-4462. Zn(2+)-binding residues include Cys-4471 and Cys-4474.

This sequence belongs to the AAA ATPase family.

The protein resides in the cytoplasm. It is found in the cytosol. The protein localises to the lipid droplet. It carries out the reaction S-ubiquitinyl-[E2 ubiquitin-conjugating enzyme]-L-cysteine + [acceptor protein]-L-lysine = [E2 ubiquitin-conjugating enzyme]-L-cysteine + N(6)-ubiquitinyl-[acceptor protein]-L-lysine.. The enzyme catalyses ATP + H2O = ADP + phosphate + H(+). It functions in the pathway protein modification; protein ubiquitination. Its function is as follows. Atypical E3 ubiquitin ligase that can catalyze ubiquitination of both proteins and lipids, and which is involved in various processes, such as lipid metabolism, angiogenesis and cell-autonomous immunity. Acts as a key immune sensor by catalyzing ubiquitination of the lipid A moiety of bacterial lipopolysaccharide (LPS) via its RZ-type zinc-finger: restricts the proliferation of cytosolic bacteria, such as Salmonella, by generating the bacterial ubiquitin coat through the ubiquitination of LPS. Ubiquitination of LPS triggers cell-autonomous immunity, such as antibacterial autophagy, leading to degradation of the microbial invader. Involved in lipid metabolism by regulating fat storage and lipid droplet formation; act by inhibiting the lipolytic process. Also regulates lipotoxicity by inhibiting desaturation of fatty acids. Also acts as an E3 ubiquitin-protein ligase via its RING-type zinc finger. Involved in the non-canonical Wnt signaling pathway in vascular development: acts by mediating ubiquitination and degradation of proteins downstream of rspo3, leading to inhibit the non-canonical Wnt signaling pathway and promoting vessel regression. Also has ATPase activity; ATPase activity is required for ubiquitination of LPS. The sequence is that of E3 ubiquitin-protein ligase rnf213-beta (rnf213b) from Danio rerio (Zebrafish).